Reading from the N-terminus, the 188-residue chain is PRA1 family protein 3 (188 aa).

At Met-1 the chain carries N-acetylmethionine. Residues 1-35 are Cytoplasmic-facing; it reads MEVQVAPLRSWEDFFPGSDRFGRPDFKDISKWNNR. Transmembrane regions (helical) follow at residues 36–56 and 57–77; these read VVNNLLYYQTNYLMVAAAVVA and IVGFLSPLNMLIGGTVVILVF. Residues 78 to 93 are Cytoplasmic-facing; the sequence is LGFVWVSHNKDILRRM. Helical transmembrane passes span 94-114 and 115-135; these read KKQYPTTFVIVIMLSSYFLIS and YLGDVMVFMFGITLPLLLMFI. Residues 136–188 lie on the Cytoplasmic side of the membrane; the sequence is HASLRLRNIKNKLENKKEEIGLKKTPMGIILDALEQQEDNINKLASYIPKVKE. The targeting to endoplasmic reticulum membrane stretch occupies residues 136-188; the sequence is HASLRLRNIKNKLENKKEEIGLKKTPMGIILDALEQQEDNINKLASYIPKVKE.

The protein belongs to the PRA1 family. In terms of assembly, binds to prenylated RAB and Ras superfamily members.

The protein resides in the endoplasmic reticulum membrane. It localises to the cell membrane. It is found in the cytoplasm. Its subcellular location is the cytoskeleton. Its function is as follows. Regulates intracellular concentrations of taurine and glutamate. Negatively modulates SLC1A1/EAAC1 glutamate transport activity by decreasing its affinity for glutamate in a PKC activity-dependent manner. May be involved in membrane traffic. The chain is PRA1 family protein 3 (ARL6IP5) from Gallus gallus (Chicken).